The primary structure comprises 100 residues: MQVLVRDNNVDQALKALKKKMQREGIFREMKLRGHYEKPSEKKAREKAEAVRRARKLARKKLQREGLLPMKPKPAFGADRGRPGAAGAGAGAGAGPRGPR.

Residues 37–52 (EKPSEKKAREKAEAVR) show a composition bias toward basic and acidic residues. The disordered stretch occupies residues 37 to 100 (EKPSEKKARE…GAGAGPRGPR (64 aa)). Positions 53-62 (RARKLARKKL) are enriched in basic residues. Positions 84–100 (GAAGAGAGAGAGPRGPR) are enriched in gly residues.

The protein belongs to the bacterial ribosomal protein bS21 family.

This chain is Small ribosomal subunit protein bS21, found in Rhodopseudomonas palustris (strain BisB5).